The following is a 207-amino-acid chain: Small ribosomal subunit protein uS4 (207 aa).

The region spanning 97-160 (SRLDNVVYRM…KKQARIVEAL (64 aa)) is the S4 RNA-binding domain.

This sequence belongs to the universal ribosomal protein uS4 family. As to quaternary structure, part of the 30S ribosomal subunit. Contacts protein S5. The interaction surface between S4 and S5 is involved in control of translational fidelity.

Its function is as follows. One of the primary rRNA binding proteins, it binds directly to 16S rRNA where it nucleates assembly of the body of the 30S subunit. In terms of biological role, with S5 and S12 plays an important role in translational accuracy. The chain is Small ribosomal subunit protein uS4 from Burkholderia pseudomallei (strain 1106a).